The following is a 368-amino-acid chain: Phosphoserine aminotransferase (368 aa).

Arg44 contacts L-glutamate. Residues 78 to 79, Trp104, Thr157, Asp179, and Gln202 contribute to the pyridoxal 5'-phosphate site; that span reads AT. Lys203 carries the N6-(pyridoxal phosphate)lysine modification. Residue 244 to 245 coordinates pyridoxal 5'-phosphate; the sequence is NT.

Belongs to the class-V pyridoxal-phosphate-dependent aminotransferase family. SerC subfamily. As to quaternary structure, homodimer. It depends on pyridoxal 5'-phosphate as a cofactor.

The protein resides in the cytoplasm. The catalysed reaction is O-phospho-L-serine + 2-oxoglutarate = 3-phosphooxypyruvate + L-glutamate. The enzyme catalyses 4-(phosphooxy)-L-threonine + 2-oxoglutarate = (R)-3-hydroxy-2-oxo-4-phosphooxybutanoate + L-glutamate. It participates in amino-acid biosynthesis; L-serine biosynthesis; L-serine from 3-phospho-D-glycerate: step 2/3. It functions in the pathway cofactor biosynthesis; pyridoxine 5'-phosphate biosynthesis; pyridoxine 5'-phosphate from D-erythrose 4-phosphate: step 3/5. Its function is as follows. Catalyzes the reversible conversion of 3-phosphohydroxypyruvate to phosphoserine and of 3-hydroxy-2-oxo-4-phosphonooxybutanoate to phosphohydroxythreonine. The polypeptide is Phosphoserine aminotransferase (Neisseria meningitidis serogroup A / serotype 4A (strain DSM 15465 / Z2491)).